Reading from the N-terminus, the 442-residue chain is Glutamyl-tRNA(Gln) amidotransferase subunit D (442 aa).

The disordered stretch occupies residues 63 to 84; it reads TQTDIGSSAGAGADTEADKTES. In terms of domain architecture, Asparaginase/glutaminase spans 102 to 429; it reads PTVSLISTGG…PDPTNAMRKS (328 aa). Residues T112, T188, D189, and K265 contribute to the active site.

This sequence belongs to the asparaginase 1 family. GatD subfamily. As to quaternary structure, heterodimer of GatD and GatE.

The catalysed reaction is L-glutamyl-tRNA(Gln) + L-glutamine + ATP + H2O = L-glutaminyl-tRNA(Gln) + L-glutamate + ADP + phosphate + H(+). In terms of biological role, allows the formation of correctly charged Gln-tRNA(Gln) through the transamidation of misacylated Glu-tRNA(Gln) in organisms which lack glutaminyl-tRNA synthetase. The reaction takes place in the presence of glutamine and ATP through an activated gamma-phospho-Glu-tRNA(Gln). The GatDE system is specific for glutamate and does not act on aspartate. The chain is Glutamyl-tRNA(Gln) amidotransferase subunit D from Haloquadratum walsbyi (strain DSM 16790 / HBSQ001).